We begin with the raw amino-acid sequence, 456 residues long: 26S proteasome non-ATPase regulatory subunit 12 (456 aa).

N-acetylalanine is present on alanine 2. A Glycyl lysine isopeptide (Lys-Gly) (interchain with G-Cter in SUMO1); alternate cross-link involves residue lysine 92. A Glycyl lysine isopeptide (Lys-Gly) (interchain with G-Cter in SUMO2); alternate cross-link involves residue lysine 92. 2 positions are modified to N6-acetyllysine: lysine 221 and lysine 368. The PCI domain maps to 242 to 420 (SICKHYRAIY…GIINFQRPKD (179 aa)).

Belongs to the proteasome subunit p55 family. In terms of assembly, component of the 19S proteasome regulatory particle complex. The 26S proteasome consists of a 20S core particle (CP) and two 19S regulatory subunits (RP). The regulatory particle is made of a lid composed of 9 subunits including PSMD12, a base containing 6 ATPases and few additional components. Interacts with ERCC6.

Component of the 26S proteasome, a multiprotein complex involved in the ATP-dependent degradation of ubiquitinated proteins. This complex plays a key role in the maintenance of protein homeostasis by removing misfolded or damaged proteins, which could impair cellular functions, and by removing proteins whose functions are no longer required. Therefore, the proteasome participates in numerous cellular processes, including cell cycle progression, apoptosis, or DNA damage repair. The protein is 26S proteasome non-ATPase regulatory subunit 12 (PSMD12) of Pongo abelii (Sumatran orangutan).